A 456-amino-acid chain; its full sequence is UPF0496 protein 4 (456 aa).

A helical membrane pass occupies residues 205–221 (SVTVFVCSIFVAVLSGS).

The protein belongs to the ROH1 family.

It localises to the membrane. The chain is UPF0496 protein 4 from Oryza sativa subsp. indica (Rice).